A 247-amino-acid polypeptide reads, in one-letter code: 3-deoxy-manno-octulosonate cytidylyltransferase (247 aa).

Belongs to the KdsB family.

It is found in the cytoplasm. It carries out the reaction 3-deoxy-alpha-D-manno-oct-2-ulosonate + CTP = CMP-3-deoxy-beta-D-manno-octulosonate + diphosphate. The protein operates within nucleotide-sugar biosynthesis; CMP-3-deoxy-D-manno-octulosonate biosynthesis; CMP-3-deoxy-D-manno-octulosonate from 3-deoxy-D-manno-octulosonate and CTP: step 1/1. It participates in bacterial outer membrane biogenesis; lipopolysaccharide biosynthesis. Activates KDO (a required 8-carbon sugar) for incorporation into bacterial lipopolysaccharide in Gram-negative bacteria. The polypeptide is 3-deoxy-manno-octulosonate cytidylyltransferase (Methylorubrum populi (strain ATCC BAA-705 / NCIMB 13946 / BJ001) (Methylobacterium populi)).